The following is a 221-amino-acid chain: MKVSMSLILITLSALVTIAKAYDPSPLQDFCVAIDDPKNGVFVNGKFCKDPKQAKAEDFFSSGLNQAGITNNKVQSNVTTVNVDQIPGLNTLGISLVRIDYAPYGQNPPHTHPRATEILVLVEGTLYVGFVSSNQDNNRLFAKVLNPGDVFVFPIGMIHFQVNIGKTPAVAFAGLSSQNAGVITIADIVFGSTPPINPDILAQAFQLDVNVVKDLEAKFKN.

A signal peptide spans 1–21; sequence MKVSMSLILITLSALVTIAKA. Residues cysteine 31 and cysteine 48 are joined by a disulfide bond. The 138-residue stretch at 76–213 folds into the Cupin type-1 domain; the sequence is SNVTTVNVDQ…AFQLDVNVVK (138 aa). Residue asparagine 77 is glycosylated (N-linked (GlcNAc...) asparagine). Residues histidine 110, histidine 112, glutamate 117, and histidine 159 each coordinate Mn(2+).

The protein belongs to the germin family. In terms of assembly, oligomer (believed to be a pentamer but probably hexamer).

The protein resides in the secreted. The protein localises to the extracellular space. It localises to the apoplast. Functionally, may play a role in plant defense. Probably has no oxalate oxidase activity even if the active site is conserved. This chain is Germin-like protein subfamily 1 member 19, found in Arabidopsis thaliana (Mouse-ear cress).